A 207-amino-acid polypeptide reads, in one-letter code: Thiamine-phosphate synthase (207 aa).

4-amino-2-methyl-5-(diphosphooxymethyl)pyrimidine contacts are provided by residues 41–45 (QLRLK) and Asn-73. The Mg(2+) site is built by Asp-74 and Asp-93. Thr-111 lines the 4-amino-2-methyl-5-(diphosphooxymethyl)pyrimidine pocket. 138–140 (TKT) contacts 2-[(2R,5Z)-2-carboxy-4-methylthiazol-5(2H)-ylidene]ethyl phosphate. 4-amino-2-methyl-5-(diphosphooxymethyl)pyrimidine is bound at residue Lys-141. Gly-168 is a 2-[(2R,5Z)-2-carboxy-4-methylthiazol-5(2H)-ylidene]ethyl phosphate binding site.

This sequence belongs to the thiamine-phosphate synthase family. Mg(2+) serves as cofactor.

The catalysed reaction is 2-[(2R,5Z)-2-carboxy-4-methylthiazol-5(2H)-ylidene]ethyl phosphate + 4-amino-2-methyl-5-(diphosphooxymethyl)pyrimidine + 2 H(+) = thiamine phosphate + CO2 + diphosphate. It catalyses the reaction 2-(2-carboxy-4-methylthiazol-5-yl)ethyl phosphate + 4-amino-2-methyl-5-(diphosphooxymethyl)pyrimidine + 2 H(+) = thiamine phosphate + CO2 + diphosphate. The enzyme catalyses 4-methyl-5-(2-phosphooxyethyl)-thiazole + 4-amino-2-methyl-5-(diphosphooxymethyl)pyrimidine + H(+) = thiamine phosphate + diphosphate. Its pathway is cofactor biosynthesis; thiamine diphosphate biosynthesis; thiamine phosphate from 4-amino-2-methyl-5-diphosphomethylpyrimidine and 4-methyl-5-(2-phosphoethyl)-thiazole: step 1/1. In terms of biological role, condenses 4-methyl-5-(beta-hydroxyethyl)thiazole monophosphate (THZ-P) and 2-methyl-4-amino-5-hydroxymethyl pyrimidine pyrophosphate (HMP-PP) to form thiamine monophosphate (TMP). The sequence is that of Thiamine-phosphate synthase from Pelagibacter ubique (strain HTCC1062).